The chain runs to 267 residues: MALWPPLNSGMLVRTGHTVLTWGITLVLFLHDTELRQWEEQGELLLPLTFLLLVLSSLLLYLAVSLMDPGYVTTQPQPQGEPKEEQAAMVPQAVPLRRCRHCLVLQPLRARHCRDCRRCVRRYDHHCPWMENCVGERNHPLFVAYLALQLVVLLWGLCLAWSGLQFFQPWGLWLRSTGLLFTTFLLLSFFALVVALLLASHLYLVARNTTTWEFISSHRIAYLRQRTSNPFDRGPTRNLAHFFCGWPSGPWETLSAEEEEEGSSQVV.

The Cytoplasmic portion of the chain corresponds to 1-9; the sequence is MALWPPLNS. Residues 10–30 traverse the membrane as a helical segment; it reads GMLVRTGHTVLTWGITLVLFL. The Lumenal segment spans residues 31–43; that stretch reads HDTELRQWEEQGE. The chain crosses the membrane as a helical span at residues 44–64; the sequence is LLLPLTFLLLVLSSLLLYLAV. Topologically, residues 65 to 140 are cytoplasmic; the sequence is SLMDPGYVTT…ENCVGERNHP (76 aa). The region spanning 97–147 is the DHHC domain; it reads RRCRHCLVLQPLRARHCRDCRRCVRRYDHHCPWMENCVGERNHPLFVAYLA. The active-site S-palmitoyl cysteine intermediate is the Cys-127. Residues 141–161 form a helical membrane-spanning segment; it reads LFVAYLALQLVVLLWGLCLAW. Topologically, residues 162 to 178 are lumenal; sequence SGLQFFQPWGLWLRSTG. A helical transmembrane segment spans residues 179–199; that stretch reads LLFTTFLLLSFFALVVALLLA. Residues 200 to 267 lie on the Cytoplasmic side of the membrane; that stretch reads SHLYLVARNT…EEEEGSSQVV (68 aa).

This sequence belongs to the DHHC palmitoyltransferase family.

Its subcellular location is the golgi apparatus membrane. It is found in the endoplasmic reticulum membrane. The catalysed reaction is L-cysteinyl-[protein] + hexadecanoyl-CoA = S-hexadecanoyl-L-cysteinyl-[protein] + CoA. Its function is as follows. Palmitoyltransferase that catalyzes the addition of palmitate onto various protein substrates. Has a palmitoyltransferase activity toward gephyrin/GPHN, regulating its clustering at synapses and its function in gamma-aminobutyric acid receptor clustering. Thereby, indirectly regulates GABAergic synaptic transmission. Negatively regulates NLRP3-driven inflammation. Catalyzes NLRP3 palmitoylation, leading to its degradation via the chaperone-mediated autophagy (CMA) process. The polypeptide is Palmitoyltransferase ZDHHC12 (Mus musculus (Mouse)).